We begin with the raw amino-acid sequence, 283 residues long: Bifunctional protein FolD (283 aa).

NADP(+) is bound by residues 166–168 (GRS), Ser-191, and Thr-232.

It belongs to the tetrahydrofolate dehydrogenase/cyclohydrolase family. In terms of assembly, homodimer.

The catalysed reaction is (6R)-5,10-methylene-5,6,7,8-tetrahydrofolate + NADP(+) = (6R)-5,10-methenyltetrahydrofolate + NADPH. It carries out the reaction (6R)-5,10-methenyltetrahydrofolate + H2O = (6R)-10-formyltetrahydrofolate + H(+). The protein operates within one-carbon metabolism; tetrahydrofolate interconversion. Its function is as follows. Catalyzes the oxidation of 5,10-methylenetetrahydrofolate to 5,10-methenyltetrahydrofolate and then the hydrolysis of 5,10-methenyltetrahydrofolate to 10-formyltetrahydrofolate. The chain is Bifunctional protein FolD from Halothermothrix orenii (strain H 168 / OCM 544 / DSM 9562).